Reading from the N-terminus, the 51-residue chain is MSRNKPLAKKLRMAKANKQNRRIPIWAYAKTNRKLRYRPKPRHWRRNSLKL.

The protein belongs to the eukaryotic ribosomal protein eL39 family.

The protein is Large ribosomal subunit protein eL39 of Methanobrevibacter smithii (strain ATCC 35061 / DSM 861 / OCM 144 / PS).